Consider the following 360-residue polypeptide: MAVQKVKLFTEAPFTLSLGGTLQDIEIAYQTYGELNKEKTNAILICHALTGDAEPYFADHSQRGWWQTFMGEGLALDTSQYFFICSNVLGGCKGTTGPSSINPKTNKPYGSQFPNIIVQDIVALQRALLTHLNIPRLHAVIGGSFGGMQATQWAIDYPDDVSNVINLCSSLLFGAEAIGFNHVMRQAVINDPNFNGGDYYDSQPPEKGLAIARMLGMLTYRTDLQLTKAFGRATKAETEFWGDYFQVESYLSYQGKKFLARFDANSYLHLLRALDLYDPGFQYESLSAALARIKARYTLVAVENDQLFKLTELQKSKKLLEESGVDLVYYQFSSDYGHDAFLVDYAFFEKKIRLALANQD.

Positions 41-344 (NAILICHALT…DYGHDAFLVD (304 aa)) constitute an AB hydrolase-1 domain. Catalysis depends on S144, which acts as the Nucleophile. R213 is a substrate binding site. Active-site residues include D305 and H338. Substrate is bound at residue D339.

This sequence belongs to the AB hydrolase superfamily. MetX family. In terms of assembly, homodimer.

It is found in the cytoplasm. It catalyses the reaction L-homoserine + acetyl-CoA = O-acetyl-L-homoserine + CoA. It participates in amino-acid biosynthesis; L-methionine biosynthesis via de novo pathway; O-acetyl-L-homoserine from L-homoserine: step 1/1. Transfers an acetyl group from acetyl-CoA to L-homoserine, forming acetyl-L-homoserine. This is Homoserine O-acetyltransferase from Pasteurella multocida (strain Pm70).